The primary structure comprises 561 residues: Mercuric reductase (561 aa).

The region spanning 1 to 65 (MTTLKITGMT…AVAGLGYEAT (65 aa)) is the HMA domain. A metal cation-binding residues include Cys11 and Cys14. The FAD site is built by Ala110, Gly130, and Thr135. Residues Cys136 and Cys141 are joined by a disulfide bond. The FAD site is built by Lys145, Ala211, Asp403, and Val411. 2 residues coordinate Hg(2+): Cys558 and Cys559.

The protein belongs to the class-I pyridine nucleotide-disulfide oxidoreductase family. In terms of assembly, homodimer. FAD is required as a cofactor.

The enzyme catalyses Hg + NADP(+) + H(+) = Hg(2+) + NADPH. Resistance to Hg(2+) in bacteria appears to be governed by a specialized system which includes mercuric reductase. MerA protein is responsible for volatilizing mercury as Hg(0). This chain is Mercuric reductase (merA), found in Acinetobacter calcoaceticus.